Here is an 802-residue protein sequence, read N- to C-terminus: Lon protease (802 aa).

In terms of domain architecture, Lon N-terminal spans 17–211 (SIVMPLFEVV…LFLHILTKHK (195 aa)). Residue 363 to 370 (GPPGTGKT) coordinates ATP. Positions 600-780 (ENVPGVVTGL…EEVLREALDI (181 aa)) constitute a Lon proteolytic domain. Active-site residues include Ser686 and Lys729.

The protein belongs to the peptidase S16 family. As to quaternary structure, homohexamer. Organized in a ring with a central cavity.

The protein resides in the cytoplasm. The enzyme catalyses Hydrolysis of proteins in presence of ATP.. Its function is as follows. ATP-dependent serine protease that mediates the selective degradation of mutant and abnormal proteins as well as certain short-lived regulatory proteins. Required for cellular homeostasis and for survival from DNA damage and developmental changes induced by stress. Degrades polypeptides processively to yield small peptide fragments that are 5 to 10 amino acids long. Binds to DNA in a double-stranded, site-specific manner. This is Lon protease from Methanosarcina barkeri (strain Fusaro / DSM 804).